The chain runs to 546 residues: RuBisCO large subunit-binding protein subunit alpha, chloroplastic (546 aa).

The transit peptide at 1 to 6 (RFSVRA) directs the protein to the chloroplast. Position 50 is a phosphoserine (Ser-50).

Belongs to the chaperonin (HSP60) family. Oligomer of probably six alpha and six beta subunits.

The protein resides in the plastid. It is found in the chloroplast. Its function is as follows. This protein binds RuBisCO small and large subunits and is implicated in the assembly of the enzyme oligomer. The chain is RuBisCO large subunit-binding protein subunit alpha, chloroplastic from Brassica napus (Rape).